The chain runs to 218 residues: Thiopurine S-methyltransferase (218 aa).

Residues tryptophan 10, leucine 45, glutamate 66, and arginine 123 each contribute to the S-adenosyl-L-methionine site.

The protein belongs to the class I-like SAM-binding methyltransferase superfamily. TPMT family.

The protein resides in the cytoplasm. The enzyme catalyses S-adenosyl-L-methionine + a thiopurine = S-adenosyl-L-homocysteine + a thiopurine S-methylether.. The chain is Thiopurine S-methyltransferase from Azotobacter vinelandii (strain DJ / ATCC BAA-1303).